A 415-amino-acid chain; its full sequence is Fructose-like permease IIC component (415 aa).

The Cytoplasmic portion of the chain corresponds to M1–M46. The region spanning L35–L415 is the PTS EIIC type-2 domain. Residues V47 to W67 traverse the membrane as a helical segment. Residues L68–S101 lie on the Periplasmic side of the membrane. A helical membrane pass occupies residues F102–I122. At G123–L126 the chain is on the cytoplasmic side. A helical transmembrane segment spans residues A127–F147. Topologically, residues D148–S157 are periplasmic. A helical transmembrane segment spans residues S158 to V178. Residues K179–T197 are Cytoplasmic-facing. Residues F198–P218 form a helical membrane-spanning segment. At F219–K237 the chain is on the periplasmic side. A helical transmembrane segment spans residues G238–I258. Residues N259–P276 are Cytoplasmic-facing. A helical membrane pass occupies residues V277 to I297. Residues D298–A318 lie on the Periplasmic side of the membrane. A helical transmembrane segment spans residues M319–I339. The Cytoplasmic segment spans residues T340–A341. Residues I342–V362 traverse the membrane as a helical segment. At Q363 to N378 the chain is on the periplasmic side. Residues L379 to F399 traverse the membrane as a helical segment. Over L400–L415 the chain is Cytoplasmic.

The protein resides in the cell inner membrane. The phosphoenolpyruvate-dependent sugar phosphotransferase system (PTS), a major carbohydrate active -transport system, catalyzes the phosphorylation of incoming sugar substrates concomitant with their translocation across the cell membrane. The chain is Fructose-like permease IIC component (fryC) from Shigella flexneri.